A 161-amino-acid chain; its full sequence is 2-C-methyl-D-erythritol 2,4-cyclodiphosphate synthase (161 aa).

A divalent metal cation contacts are provided by Asp10 and His12. Residues 10–12 and 36–37 contribute to the 4-CDP-2-C-methyl-D-erythritol 2-phosphate site; these read DVH and HS. His44 provides a ligand contact to a divalent metal cation. 4-CDP-2-C-methyl-D-erythritol 2-phosphate is bound by residues 58–60, 63–67, and Arg144; these read DIG and FSDTD.

It belongs to the IspF family. Homotrimer. A divalent metal cation is required as a cofactor.

It catalyses the reaction 4-CDP-2-C-methyl-D-erythritol 2-phosphate = 2-C-methyl-D-erythritol 2,4-cyclic diphosphate + CMP. It functions in the pathway isoprenoid biosynthesis; isopentenyl diphosphate biosynthesis via DXP pathway; isopentenyl diphosphate from 1-deoxy-D-xylulose 5-phosphate: step 4/6. Functionally, involved in the biosynthesis of isopentenyl diphosphate (IPP) and dimethylallyl diphosphate (DMAPP), two major building blocks of isoprenoid compounds. Catalyzes the conversion of 4-diphosphocytidyl-2-C-methyl-D-erythritol 2-phosphate (CDP-ME2P) to 2-C-methyl-D-erythritol 2,4-cyclodiphosphate (ME-CPP) with a corresponding release of cytidine 5-monophosphate (CMP). This is 2-C-methyl-D-erythritol 2,4-cyclodiphosphate synthase from Burkholderia ambifaria (strain ATCC BAA-244 / DSM 16087 / CCUG 44356 / LMG 19182 / AMMD) (Burkholderia cepacia (strain AMMD)).